The sequence spans 391 residues: ATPase GET3C (391 aa).

The N-terminal 50 residues, 1 to 50 (MAALLLLNRVSRSTSSISLHRVAGTLGFNSFNAQIHGDRISGTLFRVRSL), are a transit peptide targeting the mitochondrion. 77–84 (KGGVGKTS) is an ATP binding site. Asp-106 is an active-site residue. Asn-328 provides a ligand contact to ATP.

It belongs to the arsA ATPase family.

The protein resides in the mitochondrion matrix. It catalyses the reaction ATP + H2O = ADP + phosphate + H(+). In Arabidopsis thaliana (Mouse-ear cress), this protein is ATPase GET3C.